We begin with the raw amino-acid sequence, 141 residues long: ATP synthase epsilon chain (141 aa).

This sequence belongs to the ATPase epsilon chain family. As to quaternary structure, F-type ATPases have 2 components, CF(1) - the catalytic core - and CF(0) - the membrane proton channel. CF(1) has five subunits: alpha(3), beta(3), gamma(1), delta(1), epsilon(1). CF(0) has three main subunits: a, b and c.

The protein localises to the cell inner membrane. In terms of biological role, produces ATP from ADP in the presence of a proton gradient across the membrane. The protein is ATP synthase epsilon chain of Methylobacillus flagellatus (strain ATCC 51484 / DSM 6875 / VKM B-1610 / KT).